Reading from the N-terminus, the 56-residue chain is MDRILLEILACPICKGKLVYSQDEQELICRFDKLAYPIHDGIPVMLPDSTRPLIER.

This sequence belongs to the UPF0434 family.

This Coxiella burnetii (strain Dugway 5J108-111) protein is UPF0434 protein CBUD_1597.1.